Consider the following 243-residue polypeptide: Arginine transport ATP-binding protein ArtP (243 aa).

An ABC transporter domain is found at 3 to 242; it reads IRVKNLNFFY…KTEQFKHYLS (240 aa). 35–42 contributes to the ATP binding site; sequence GPSGAGKS.

Belongs to the ABC transporter superfamily. As to quaternary structure, the complex is composed of two ATP-binding proteins (ArtP), two transmembrane proteins (ArtM and ArtQ) and a solute-binding protein (ArtI).

It localises to the cell inner membrane. It carries out the reaction a polar amino acid(out) + ATP + H2O = a polar amino acid(in) + ADP + phosphate + H(+). The enzyme catalyses L-arginine(out) + ATP + H2O = L-arginine(in) + ADP + phosphate + H(+). Functionally, part of the ABC transporter complex ArtPIQM involved in arginine transport. Probably responsible for energy coupling to the transport system. This Haemophilus influenzae (strain ATCC 51907 / DSM 11121 / KW20 / Rd) protein is Arginine transport ATP-binding protein ArtP (artP).